The following is a 325-amino-acid chain: Aspartate carbamoyltransferase catalytic subunit (325 aa).

Carbamoyl phosphate-binding residues include Arg-55 and Thr-56. Lys-83 is a binding site for L-aspartate. Carbamoyl phosphate-binding residues include Arg-105, His-135, and Gln-138. L-aspartate is bound by residues Arg-176 and Arg-230. Carbamoyl phosphate-binding residues include Gly-271 and Pro-272.

The protein belongs to the aspartate/ornithine carbamoyltransferase superfamily. ATCase family. Heterododecamer (2C3:3R2) of six catalytic PyrB chains organized as two trimers (C3), and six regulatory PyrI chains organized as three dimers (R2).

It carries out the reaction carbamoyl phosphate + L-aspartate = N-carbamoyl-L-aspartate + phosphate + H(+). The protein operates within pyrimidine metabolism; UMP biosynthesis via de novo pathway; (S)-dihydroorotate from bicarbonate: step 2/3. Functionally, catalyzes the condensation of carbamoyl phosphate and aspartate to form carbamoyl aspartate and inorganic phosphate, the committed step in the de novo pyrimidine nucleotide biosynthesis pathway. The protein is Aspartate carbamoyltransferase catalytic subunit of Streptomyces avermitilis (strain ATCC 31267 / DSM 46492 / JCM 5070 / NBRC 14893 / NCIMB 12804 / NRRL 8165 / MA-4680).